A 242-amino-acid chain; its full sequence is tRNA pseudouridine synthase A (242 aa).

The active-site Nucleophile is Asp-51. Tyr-107 provides a ligand contact to substrate.

It belongs to the tRNA pseudouridine synthase TruA family. In terms of assembly, homodimer.

The catalysed reaction is uridine(38/39/40) in tRNA = pseudouridine(38/39/40) in tRNA. Functionally, formation of pseudouridine at positions 38, 39 and 40 in the anticodon stem and loop of transfer RNAs. This Helicobacter pylori (strain J99 / ATCC 700824) (Campylobacter pylori J99) protein is tRNA pseudouridine synthase A.